An 85-amino-acid chain; its full sequence is Alpha-toxin Amm8 (85 aa).

Residues 1–19 (MNYLVMISLALLFMTGVES) form the signal peptide. Positions 21–83 (KDGYIVNDIN…VRTKGPGRCN (63 aa)) constitute an LCN-type CS-alpha/beta domain. 4 cysteine pairs are disulfide-bonded: Cys31/Cys82, Cys35/Cys55, Cys41/Cys65, and Cys45/Cys67. Residue Arg85 is a propeptide, removed by a carboxypeptidase.

Belongs to the long (4 C-C) scorpion toxin superfamily. Sodium channel inhibitor family. Alpha subfamily. As to expression, expressed by the venom gland.

The protein resides in the secreted. In terms of biological role, alpha toxins bind voltage-independently at site-3 of sodium channels (Nav) and inhibit the inactivation of the activated channels, thereby blocking neuronal transmission. The toxin principally slows the inactivation process of TTX-sensitive sodium channels. It discriminates neuronal versus muscular sodium channel, as it is more potent on rat brain Nav1.2/SCN2A (EC(50)=29 nM) than on rat skeletal muscle Nav1.4/SCN4A (EC(50)=416 nM). It also shows a weak activity on Nav1.7/SCN9A (EC(50)=1.76 uM). In vivo, the toxin produces pain hypersensibility to mechanical and thermal stimuli. It also exhibits potent analgesic activity (when injected intraperitoneally), increasing hot plate and tail flick withdrawal latencies in a dose-dependent fashion. This paradoxical analgesic action, is significantly suppressed by opioid receptor antagonists, suggesting a pain-induced analgesia mechanism that involves an endogenous opioid system. This led to hypothesis that pain relief induced by peripheral administration of Amm VIII may result from sensitization of primary afferent neurons and subsequent activation of an opioid-dependent noxious inhibitory control. In Androctonus mauritanicus mauritanicus (Scorpion), this protein is Alpha-toxin Amm8.